A 120-amino-acid chain; its full sequence is Crustacean hyperglycemic hormones 1 (120 aa).

Positions 1–24 (MIAFRAVWSALLASLLLLLLAPSA) are cleaved as a signal peptide. Disulfide bonds link cysteine 53–cysteine 89, cysteine 69–cysteine 85, and cysteine 72–cysteine 98. Position 118 is a valine amide (valine 118).

It belongs to the arthropod CHH/MIH/GIH/VIH hormone family. As to expression, produced by the medulla terminalis X-organ in the eyestalks and transported to the sinus gland where they are stored and released.

It is found in the secreted. Hormone found in the sinus gland of isopods and decapods which controls the blood sugar level. Has a secretagogue action over the amylase released from the midgut gland. May act as a stress hormone and may be involved in the control of molting and reproduction. This is Crustacean hyperglycemic hormones 1 from Penaeus japonicus (Kuruma prawn).